Consider the following 455-residue polypeptide: Bifunctional protein GlmU (455 aa).

The segment at 1–232 (MASITGALIL…DPNLLGVNDP (232 aa)) is pyrophosphorylase. Residues 10 to 13 (LAAG), lysine 24, glutamine 75, and 80 to 81 (GT) each bind UDP-N-acetyl-alpha-D-glucosamine. Mg(2+) is bound at residue aspartate 106. UDP-N-acetyl-alpha-D-glucosamine-binding residues include glycine 141, glutamate 155, asparagine 172, and asparagine 230. Asparagine 230 serves as a coordination point for Mg(2+). A linker region spans residues 233-253 (AELIRSEALVRARIALNWIEK). Residues 254–455 (RVLIHAPETV…QTTLPRRRNS (202 aa)) are N-acetyltransferase. UDP-N-acetyl-alpha-D-glucosamine-binding residues include arginine 336 and lysine 354. The active-site Proton acceptor is histidine 366. UDP-N-acetyl-alpha-D-glucosamine is bound by residues tyrosine 369 and asparagine 380. Residues alanine 383, 389–390 (NY), serine 408, alanine 426, and arginine 443 each bind acetyl-CoA.

In the N-terminal section; belongs to the N-acetylglucosamine-1-phosphate uridyltransferase family. The protein in the C-terminal section; belongs to the transferase hexapeptide repeat family. Homotrimer. Mg(2+) is required as a cofactor.

The protein resides in the cytoplasm. The enzyme catalyses alpha-D-glucosamine 1-phosphate + acetyl-CoA = N-acetyl-alpha-D-glucosamine 1-phosphate + CoA + H(+). It catalyses the reaction N-acetyl-alpha-D-glucosamine 1-phosphate + UTP + H(+) = UDP-N-acetyl-alpha-D-glucosamine + diphosphate. It functions in the pathway nucleotide-sugar biosynthesis; UDP-N-acetyl-alpha-D-glucosamine biosynthesis; N-acetyl-alpha-D-glucosamine 1-phosphate from alpha-D-glucosamine 6-phosphate (route II): step 2/2. Its pathway is nucleotide-sugar biosynthesis; UDP-N-acetyl-alpha-D-glucosamine biosynthesis; UDP-N-acetyl-alpha-D-glucosamine from N-acetyl-alpha-D-glucosamine 1-phosphate: step 1/1. It participates in bacterial outer membrane biogenesis; LPS lipid A biosynthesis. Its function is as follows. Catalyzes the last two sequential reactions in the de novo biosynthetic pathway for UDP-N-acetylglucosamine (UDP-GlcNAc). The C-terminal domain catalyzes the transfer of acetyl group from acetyl coenzyme A to glucosamine-1-phosphate (GlcN-1-P) to produce N-acetylglucosamine-1-phosphate (GlcNAc-1-P), which is converted into UDP-GlcNAc by the transfer of uridine 5-monophosphate (from uridine 5-triphosphate), a reaction catalyzed by the N-terminal domain. The polypeptide is Bifunctional protein GlmU (Nitratidesulfovibrio vulgaris (strain DSM 19637 / Miyazaki F) (Desulfovibrio vulgaris)).